The chain runs to 345 residues: Anthranilate phosphoribosyltransferase (345 aa).

Residues Gly-84, 87 to 88 (GD), Thr-92, 94 to 97 (NIST), 112 to 120 (KHGNRSVSS), and Ser-124 contribute to the 5-phospho-alpha-D-ribose 1-diphosphate site. Gly-84 contacts anthranilate. Ser-96 is a binding site for Mg(2+). Residue Asn-115 coordinates anthranilate. Arg-170 lines the anthranilate pocket. Residues Asp-229 and Glu-230 each coordinate Mg(2+).

The protein belongs to the anthranilate phosphoribosyltransferase family. Homodimer. The cofactor is Mg(2+).

It catalyses the reaction N-(5-phospho-beta-D-ribosyl)anthranilate + diphosphate = 5-phospho-alpha-D-ribose 1-diphosphate + anthranilate. It functions in the pathway amino-acid biosynthesis; L-tryptophan biosynthesis; L-tryptophan from chorismate: step 2/5. Catalyzes the transfer of the phosphoribosyl group of 5-phosphorylribose-1-pyrophosphate (PRPP) to anthranilate to yield N-(5'-phosphoribosyl)-anthranilate (PRA). The chain is Anthranilate phosphoribosyltransferase from Xanthomonas oryzae pv. oryzae (strain MAFF 311018).